An 82-amino-acid polypeptide reads, in one-letter code: Probable [Fe-S]-dependent transcriptional repressor (82 aa).

Cys56, Cys61, Cys64, and Cys71 together coordinate iron-sulfur cluster.

The protein belongs to the FeoC family.

May function as a transcriptional regulator that controls feoABC expression. This is Probable [Fe-S]-dependent transcriptional repressor from Yersinia enterocolitica serotype O:8 / biotype 1B (strain NCTC 13174 / 8081).